We begin with the raw amino-acid sequence, 309 residues long: Homoserine kinase (309 aa).

Position 91–101 (91–101) interacts with ATP; it reads PIGSGLGSSAC.

Belongs to the GHMP kinase family. Homoserine kinase subfamily.

The protein localises to the cytoplasm. The enzyme catalyses L-homoserine + ATP = O-phospho-L-homoserine + ADP + H(+). It participates in amino-acid biosynthesis; L-threonine biosynthesis; L-threonine from L-aspartate: step 4/5. Functionally, catalyzes the ATP-dependent phosphorylation of L-homoserine to L-homoserine phosphate. The chain is Homoserine kinase from Cronobacter sakazakii (strain ATCC BAA-894) (Enterobacter sakazakii).